The primary structure comprises 201 residues: MAALVEPLGLEREVSRAVELLERLQRSGELPPQKLQALQRVLQSRFCSAIREVYEQLYDTLDITGSAEIRAHATAKATVAAFTASEGHAHPRVVELPKTDEGLGFNIMGGKEQNSPIYISRVIPGGVADRHGGLKRGDQLLSVNGVSVEGEQHEKAVELLKAAQGSVKLVVRYTPRVLEEMEARFEKMRSARRRQQHQSYS.

The short motif at M1–E13 is the Kinase interacting site element. In terms of domain architecture, L27 spans L10–G65. The 83-residue stretch at V93–P175 folds into the PDZ domain.

It belongs to the lin-7 family. In terms of assembly, forms a complex with CASK and CASKIN1. Component of the brain-specific heterotrimeric complex (LIN-10-LIN-2-LIN-7 complex) composed of at least APBA1, CASK, and LIN7, which associates with the motor protein KIF17 to transport vesicles along microtubules. Forms a heterotrimeric complex composed of MMP5, LIN7B and PATJ; the N-terminal L27 domain of PALS1 interacts with the L27 domain of PATJ and the C-terminal L27 domain of PALS1 interacts with the L27 domain of LIN7B. Forms a heterotrimeric complex with DLG1 and CASK via their L27 domains. Interacts with DLG4 and GRIN2B as well as CDH1 and CTNNB1, the channels KCNJ12/Kir2.2, KCNJ4/Kir2.3 and probably KCNJ2/Kir2.1 and SLC6A12/BGT-1 via its PDZ domain. The association of LIN7A with cadherin and beta-catenin is calcium-dependent, occurs at synaptic junctions and requires the actin cytoskeleton. Interacts with EGFR, ERBB2, ERBB3 and ERBB4 with both PDZ and KID domains. Interacts with ASIC3. Interacts with TOPK. Interacts with RTKN. Associates with KIF17 via APBA1. Interacts with APBA1. Interacts with MPP7. Interacts with DLG2. Interacts with DLG3.

It is found in the cell membrane. Its subcellular location is the basolateral cell membrane. The protein resides in the cell junction. The protein localises to the postsynaptic density membrane. It localises to the tight junction. Functionally, plays a role in establishing and maintaining the asymmetric distribution of channels and receptors at the plasma membrane of polarized cells. Forms membrane-associated multiprotein complexes that may regulate delivery and recycling of proteins to the correct membrane domains. The tripartite complex composed of LIN7 (LIN7A, LIN7B or LIN7C), CASK and APBA1 associates with the motor protein KIF17 to transport vesicles containing N-methyl-D-aspartate (NMDA) receptor subunit NR2B along microtubules. This complex may have the potential to couple synaptic vesicle exocytosis to cell adhesion in brain. Ensures the proper localization of GRIN2B (subunit 2B of the NMDA receptor) to neuronal postsynaptic density and may function in localizing synaptic vesicles at synapses where it is recruited by beta-catenin and cadherin. Required to localize Kir2 channels, GABA transporter (SLC6A12) and EGFR/ERBB1, ERBB2, ERBB3 and ERBB4 to the basolateral membrane of epithelial cells. May increase the amplitude of ASIC3 acid-evoked currents by stabilizing the channel at the cell surface. This Bos taurus (Bovine) protein is Protein lin-7 homolog B (LIN7B).